The primary structure comprises 1091 residues: MSWFNASQLSSFAKQALSQAQKSIDRVLDIQEEEPSAWAEAIPYGEPGISPPVSGGWDTSTWGLNSTSSEPQSPPTASQAITKPVRRTVVDESENFFSAFLSPSDAHTIQKSPVVSKPPSKSQRPEEEVKSSLQESSSPGQSRVSETAEVRDSVCVSGETSAVGTPSPVPEDKHEETAGEESEVKVPTVRLKASENVVNVNTTEDVSTTSTQSLTAETKDMALEPKEQKHEDRQSNTPSPPVSSFSSGTSTTSDIEVLDHESVISESSASSRQETSDAKSSLHLMQTSFQLLSASACPEYSRLDDFQKLNESCCSSDAFERIDSFSVQSLDSRSVSEINSDDELPGKGYALVPIIVSPSTPKTKVVESTEENAEEEEGNETLVAPSEEAELEESGRSATPVNCDQPDILASPTAGSGGHSASGPATEQCEAVENQPKAPPEKEDVCKTVEFLNEKLEKRETQLLSLSKEKALLEEAYDNLKDEMFRVKEESSSISSLKDEFTQRIAEAEKKVQLACKERDAAKKEMKTIKEELATRLNSSQTADLLKEKDEQIQGLMEEGEKLSKQQLHNSNIIKKLRAKDKDNENVIAKLNRKAKELEEELQHLRQVLDGKEEVEKQHRENIKKLNSVVERQEKDLGRLQVDMDELEEKSRSTQAALDSAYRELTDLHKANAAKDSEVQEAALRREMKAKEELSGALEKAQEEARQQQEALVLQVGDLRLALQRAEQAAARKEDYLRHEISELQQRLQEAENRNQELSQSVSSTARPLLRQIENLQATLGSQTSSWETLEKSLSDRLGESQTLLAAAVERERAATEELLANKIQMSSVESQNTLLRQENSRLQAQLESEKNKLRKLEDENSRYQVELENLKDEYVRTLEESRKEKTLLSSQLEMERMKVEQERKKTIFTQEALKEKDHKLFSVCSTPTMSRSSSISGVDAAGLQASFLSQDESHDHSFGPMSTSASGSNLYEAVRMGAGSSIIENLQSQLKLREGEISHLQLEISNLEKTRSIMSEELVKLTNQNDELEEKVKEIPKLRVQLRDLDQRYNTILQMYGEKAEEAEELRLDLEDVKNMYKTQIDELLRQRLS.

Disordered stretches follow at residues 42-86 and 100-280; these read IPYG…KPVR and FLSP…DAKS. Residues 57 to 81 show a composition bias toward polar residues; sequence WDTSTWGLNSTSSEPQSPPTASQAI. 4 positions are modified to phosphoserine: S73, S78, S112, and S136. Composition is skewed to low complexity over residues 111–122, 131–142, and 194–211; these read KSPVVSKPPSKS, SSLQESSSPGQS, and SENV…TTST. S213 carries the phosphoserine modification. Positions 217–234 are enriched in basic and acidic residues; the sequence is ETKDMALEPKEQKHEDRQ. 2 stretches are compositionally biased toward low complexity: residues 242 to 253 and 264 to 273; these read VSSFSSGTSTTS and ISESSASSRQ. S324, S326, S329, S334, S340, and S357 each carry phosphoserine. The interval 329 to 338 is interaction with Elongin BC complex; it reads SLDSRSVSEI. Residues 360 to 443 form a disordered region; that stretch reads TPKTKVVEST…NQPKAPPEKE (84 aa). Residues 368–379 show a composition bias toward acidic residues; sequence STEENAEEEEGN. Phosphoserine occurs at positions 411 and 540. Coiled-coil stretches lie at residues 443 to 767 and 824 to 894; these read EDVC…STAR and IQMS…SQLE. Phosphoserine is present on residues S923 and S926. At T927 the chain carries Phosphothreonine. Phosphoserine is present on S931. The stretch at 984 to 1090 forms a coiled coil; sequence IENLQSQLKL…QIDELLRQRL (107 aa).

In terms of assembly, component of the SNF/SWI transcription factor complexes. Interacts with RAB6A. Interacts with TCEB1. Interacts with STAT3 and FER. Interacts with TRNP1; may regulate TRNP1 proteasomal degradation. In terms of processing, phosphorylated by FER.

It localises to the cytoplasm. Its subcellular location is the nucleus. It is found in the golgi apparatus membrane. In terms of biological role, potential coactivator of the androgen receptor. May play critical roles in two RAB6-dependent retrograde transport processes: one from endosomes to the Golgi and the other from the Golgi to the ER. Mediates STAT3 degradation. This Mus musculus (Mouse) protein is TATA element modulatory factor (Tmf1).